A 294-amino-acid polypeptide reads, in one-letter code: tRNA-uridine aminocarboxypropyltransferase 1 (294 aa).

The segment at 158–185 (DMQNDSSCEPSLKRPKCSQQYDKSKNEG) is disordered. The DXTW signature appears at 202–205 (DSTW).

This sequence belongs to the TDD superfamily. DTWD1 family.

Its subcellular location is the nucleus. The catalysed reaction is a uridine in tRNA + S-adenosyl-L-methionine = a 3-[(3S)-3-amino-3-carboxypropyl]uridine in tRNA + S-methyl-5'-thioadenosine + H(+). Its function is as follows. Catalyzes the formation of 3-(3-amino-3-carboxypropyl)uridine (acp3U) at position 20 in the D-loop of several cytoplasmic tRNAs (acp3U(20)). The polypeptide is tRNA-uridine aminocarboxypropyltransferase 1 (Xenopus tropicalis (Western clawed frog)).